Here is a 230-residue protein sequence, read N- to C-terminus: All-trans retinoic acid-induced differentiation factor (230 aa).

The first 26 residues, 1–26 (MTANVTVSSMYLFTVLLLLFNVYVNS), serve as a signal peptide directing secretion. Topologically, residues 27-200 (QDTDAQLCQM…YKCMRQGEFP (174 aa)) are extracellular. The EGF-like domain occupies 152 to 194 (QKNACNQTVQMPLVCPENSLCSPYGPGFFECSCLNNFHGYKCM). Disulfide bonds link Cys156–Cys172, Cys166–Cys182, and Cys184–Cys193. Residues 201–221 (LVKVLGILTASTVVVSSVLWF) traverse the membrane as a helical segment. At 222-230 (TQRRKVKNT) the chain is on the cytoplasmic side.

Its subcellular location is the nucleus envelope. The protein resides in the cell membrane. It localises to the lysosome membrane. Functionally, involved in osteoblast cell differentiation. May play a role in inducing the cell cycle arrest. The sequence is that of All-trans retinoic acid-induced differentiation factor (atraid) from Danio rerio (Zebrafish).